We begin with the raw amino-acid sequence, 129 residues long: Small ribosomal subunit protein uS9 (129 aa).

The protein belongs to the universal ribosomal protein uS9 family.

The polypeptide is Small ribosomal subunit protein uS9 (rps9) (Thermoplasma acidophilum (strain ATCC 25905 / DSM 1728 / JCM 9062 / NBRC 15155 / AMRC-C165)).